The following is a 433-amino-acid chain: Putative zinc metalloprotease BB_0118 (433 aa).

Position 17 (His-17) interacts with Zn(2+). The active site involves Glu-18. Position 21 (His-21) interacts with Zn(2+). The chain crosses the membrane as a helical span at residues Ile-98–Ser-120. The PDZ domain occupies Thr-193–Gly-265. Transmembrane regions (helical) follow at residues Val-334–Ile-356, Leu-366–Phe-388, and Thr-401–Asn-423.

The protein belongs to the peptidase M50B family. Requires Zn(2+) as cofactor.

It localises to the cell inner membrane. The sequence is that of Putative zinc metalloprotease BB_0118 from Borreliella burgdorferi (strain ATCC 35210 / DSM 4680 / CIP 102532 / B31) (Borrelia burgdorferi).